We begin with the raw amino-acid sequence, 298 residues long: Tyrosine recombinase XerC (298 aa).

The Core-binding (CB) domain occupies methionine 1–methionine 84. In terms of domain architecture, Tyr recombinase spans tyrosine 105 to leucine 286. Residues arginine 145, lysine 169, histidine 238, arginine 241, and histidine 264 contribute to the active site. Tyrosine 273 (O-(3'-phospho-DNA)-tyrosine intermediate) is an active-site residue.

The protein belongs to the 'phage' integrase family. XerC subfamily. In terms of assembly, forms a cyclic heterotetrameric complex composed of two molecules of XerC and two molecules of XerD.

Its subcellular location is the cytoplasm. Site-specific tyrosine recombinase, which acts by catalyzing the cutting and rejoining of the recombining DNA molecules. The XerC-XerD complex is essential to convert dimers of the bacterial chromosome into monomers to permit their segregation at cell division. It also contributes to the segregational stability of plasmids. This chain is Tyrosine recombinase XerC, found in Staphylococcus aureus.